Here is a 41-residue protein sequence, read N- to C-terminus: MKDFTTYLSTAPVVAAAWFTFTAGLLIEINRFFPDPLAFSF.

The helical transmembrane segment at 7–27 threads the bilayer; the sequence is YLSTAPVVAAAWFTFTAGLLI.

Belongs to the PsaJ family.

It localises to the plastid. The protein localises to the chloroplast thylakoid membrane. In terms of biological role, may help in the organization of the PsaE and PsaF subunits. This Oltmannsiellopsis viridis (Marine flagellate) protein is Photosystem I reaction center subunit IX.